The chain runs to 224 residues: Adenylate kinase (224 aa).

Glycine 10–threonine 15 contacts ATP. Residues alanine 30 to leucine 59 are NMP. Residues serine 31, arginine 36, aspartate 57 to leucine 59, glycine 83 to arginine 86, and glutamine 90 contribute to the AMP site. The tract at residues glycine 124–aspartate 161 is LID. Arginine 125 lines the ATP pocket. Cysteine 128 and cysteine 131 together coordinate Zn(2+). ATP is bound at residue valine 134–tyrosine 135. Zn(2+)-binding residues include cysteine 148 and cysteine 151. Residues arginine 158 and arginine 169 each coordinate AMP. Glycine 197 lines the ATP pocket.

Belongs to the adenylate kinase family. As to quaternary structure, monomer.

It is found in the cytoplasm. It catalyses the reaction AMP + ATP = 2 ADP. It functions in the pathway purine metabolism; AMP biosynthesis via salvage pathway; AMP from ADP: step 1/1. Functionally, catalyzes the reversible transfer of the terminal phosphate group between ATP and AMP. Plays an important role in cellular energy homeostasis and in adenine nucleotide metabolism. This chain is Adenylate kinase, found in Thermococcus sibiricus (strain DSM 12597 / MM 739).